Here is a 372-residue protein sequence, read N- to C-terminus: MNVPMLDLSEQYEQLKPEIMRVLDEVMRSSRFILGDYVKKLEADIAAYSRAKHGIGCGNGSDAIHIALQAAGVGPGDEVITTAFTFFATAGSIARAGAKPVFVDIDPVTFNIDPAQVEAAVTEKTKAIIPVHLYGQMADMEAIAAIAKRHGLVVIEDAAQAIGAKYNGKCVGELGTAATYSFFPTKNLGAYGDGGMIITNDDELAEKCRVIRVHGSKPKYYHHVLGYNSRLDEMQAAILSVKFPHLDRWTEQRRKHAATYTRLLEEAVGDLVVTPKEVDGRYHVFHQYTIRAPKRDELQAFLKEQGIATMVYYPLPLHLQPVFASLGYKEGQLPEAEKAAKEALSLPMFPELKEEQQQYVVEKIAEFYRHFA.

The tract at residues 53-158 (HGIGCGNGSD…RHGLVVIEDA (106 aa)) is hydrophobic. Residues 160 to 179 (QAIGAKYNGKCVGELGTAAT) constitute a DNA-binding region (H-T-H motif). K186 bears the N6-(pyridoxal phosphate)lysine mark.

The protein belongs to the DegT/DnrJ/EryC1 family.

It is found in the cell membrane. Its function is as follows. This membrane protein may function as a sensor protein and may transfer the signal of environmental stimuli to the regulatory region of target genes to activate or repress transcription of the genes. The polypeptide is Pleiotropic regulatory protein (degT) (Geobacillus stearothermophilus (Bacillus stearothermophilus)).